The following is a 377-amino-acid chain: Pulmonary surfactant-associated protein B (377 aa).

The signal sequence occupies residues 1–22; that stretch reads MAKSHLLQWLLLLPTLCCPGAA. Residues 23–191 constitute a propeptide that is removed on maturation; sequence ITSASSLECA…PHTQDFSEQQ (169 aa). Residues 24-64 form the Saposin A-type domain; the sequence is TSASSLECAQGPQFWCQSLEHAVQCRALGHCLQEVWGHAGA. Saposin B-type domains follow at residues 64–146, 195–272, and 291–366; these read ANDL…PRGQ, PLPF…STED, and QDTE…EAPA. Cystine bridges form between C68-C142, C71-C136, C99-C111, C199-C268, C202-C262, C226-C237, C295-C362, C298-C356, and C321-C331. The propeptide occupies 271 to 377; the sequence is EDAMGPALPA…PLQCFQTPHL (107 aa). N307 carries an N-linked (GlcNAc...) asparagine glycan.

Homodimer; disulfide-linked.

It is found in the secreted. The protein resides in the extracellular space. It localises to the surface film. In terms of biological role, pulmonary surfactant-associated proteins promote alveolar stability by lowering the surface tension at the air-liquid interface in the peripheral air spaces. SP-B increases the collapse pressure of palmitic acid to nearly 70 millinewtons per meter. The sequence is that of Pulmonary surfactant-associated protein B (Sftpb) from Mus musculus (Mouse).